Here is a 186-residue protein sequence, read N- to C-terminus: Ribonuclease HII (186 aa).

Residues 2–186 (KILAGVDEVG…KTFSPISDLL (185 aa)) enclose the RNase H type-2 domain. The a divalent metal cation site is built by Asp-8, Glu-9, and Asp-99.

Belongs to the RNase HII family. It depends on Mn(2+) as a cofactor. Mg(2+) serves as cofactor.

It is found in the cytoplasm. It catalyses the reaction Endonucleolytic cleavage to 5'-phosphomonoester.. Its function is as follows. Endonuclease that specifically degrades the RNA of RNA-DNA hybrids. The chain is Ribonuclease HII from Pelagibacter ubique (strain HTCC1062).